Consider the following 265-residue polypeptide: Acetylglutamate kinase (265 aa).

Residues 41 to 42 (GG), Arg-63, and Asn-156 each bind substrate.

The protein belongs to the acetylglutamate kinase family. ArgB subfamily.

It is found in the cytoplasm. It carries out the reaction N-acetyl-L-glutamate + ATP = N-acetyl-L-glutamyl 5-phosphate + ADP. It participates in amino-acid biosynthesis; L-arginine biosynthesis; N(2)-acetyl-L-ornithine from L-glutamate: step 2/4. In terms of biological role, catalyzes the ATP-dependent phosphorylation of N-acetyl-L-glutamate. This chain is Acetylglutamate kinase, found in Brevibacillus brevis (strain 47 / JCM 6285 / NBRC 100599).